Reading from the N-terminus, the 1030-residue chain is Isoleucine--tRNA ligase 2 (1030 aa).

The short motif at 48–58 (PFATGLPHYGH) is the 'HIGH' region element. Positions 589-593 (KMSKR) match the 'KMSKS' region motif. Position 592 (Lys-592) interacts with ATP.

This sequence belongs to the class-I aminoacyl-tRNA synthetase family. IleS type 2 subfamily. In terms of assembly, monomer. Zn(2+) serves as cofactor.

It localises to the cytoplasm. The catalysed reaction is tRNA(Ile) + L-isoleucine + ATP = L-isoleucyl-tRNA(Ile) + AMP + diphosphate. Its function is as follows. Catalyzes the attachment of isoleucine to tRNA(Ile). As IleRS can inadvertently accommodate and process structurally similar amino acids such as valine, to avoid such errors it has two additional distinct tRNA(Ile)-dependent editing activities. One activity is designated as 'pretransfer' editing and involves the hydrolysis of activated Val-AMP. The other activity is designated 'posttransfer' editing and involves deacylation of mischarged Val-tRNA(Ile). Functionally, confers high-level resistance to the antibiotic mupirocin (pseudomonic acid A), an Ile-analog produced by P.fluorescens NCIMB 10586 itself that competitively inhibits activation by Ile-tRNA synthetase, thus inhibiting protein biosynthesis. The sequence is that of Isoleucine--tRNA ligase 2 (ileS2) from Pseudomonas fluorescens.